The sequence spans 55 residues: Neurotoxin X-29S (55 aa).

The first 23 residues, 1–23 (MKIFFAVLVILVLFSMLIWTAYG), serve as a signal peptide directing secretion. 3 disulfide bridges follow: cysteine 30/cysteine 45, cysteine 36/cysteine 50, and cysteine 39/cysteine 53.

Expressed by the venom gland.

The protein resides in the secreted. This is Neurotoxin X-29S from Olivierus martensii (Manchurian scorpion).